The primary structure comprises 538 residues: CTP synthase (538 aa).

The tract at residues 1 to 266 (MKTKFIFVTG…DDQVVDKLNI (266 aa)) is amidoligase domain. S14 lines the CTP pocket. S14 is a UTP binding site. ATP-binding positions include 15–20 (SIGKGL) and D72. The Mg(2+) site is built by D72 and E140. Residues 147 to 149 (DIE), 187 to 192 (KTKPTQ), and K223 contribute to the CTP site. Residues 187-192 (KTKPTQ) and K223 contribute to the UTP site. The 243-residue stretch at 292 to 534 (HIAIVGKYVN…IAAALEHRGK (243 aa)) folds into the Glutamine amidotransferase type-1 domain. Residue G354 participates in L-glutamine binding. The active-site Nucleophile; for glutamine hydrolysis is the C381. L-glutamine-binding positions include 382 to 385 (LGMQ), E405, and R462. Catalysis depends on residues H507 and E509.

The protein belongs to the CTP synthase family. Homotetramer.

It carries out the reaction UTP + L-glutamine + ATP + H2O = CTP + L-glutamate + ADP + phosphate + 2 H(+). The enzyme catalyses L-glutamine + H2O = L-glutamate + NH4(+). It catalyses the reaction UTP + NH4(+) + ATP = CTP + ADP + phosphate + 2 H(+). It functions in the pathway pyrimidine metabolism; CTP biosynthesis via de novo pathway; CTP from UDP: step 2/2. With respect to regulation, allosterically activated by GTP, when glutamine is the substrate; GTP has no effect on the reaction when ammonia is the substrate. The allosteric effector GTP functions by stabilizing the protein conformation that binds the tetrahedral intermediate(s) formed during glutamine hydrolysis. Inhibited by the product CTP, via allosteric rather than competitive inhibition. Its function is as follows. Catalyzes the ATP-dependent amination of UTP to CTP with either L-glutamine or ammonia as the source of nitrogen. Regulates intracellular CTP levels through interactions with the four ribonucleotide triphosphates. This is CTP synthase from Geobacter metallireducens (strain ATCC 53774 / DSM 7210 / GS-15).